We begin with the raw amino-acid sequence, 263 residues long: L-aspartate dehydrogenase (263 aa).

Residues Ala-120 and Asn-186 each contribute to the NAD(+) site. His-216 is a catalytic residue.

The protein belongs to the L-aspartate dehydrogenase family.

It catalyses the reaction L-aspartate + NADP(+) + H2O = oxaloacetate + NH4(+) + NADPH + H(+). The catalysed reaction is L-aspartate + NAD(+) + H2O = oxaloacetate + NH4(+) + NADH + H(+). It functions in the pathway cofactor biosynthesis; NAD(+) biosynthesis; iminoaspartate from L-aspartate (dehydrogenase route): step 1/1. Its function is as follows. Specifically catalyzes the NAD or NADP-dependent dehydrogenation of L-aspartate to iminoaspartate. The chain is L-aspartate dehydrogenase from Acinetobacter baumannii (strain AB307-0294).